The chain runs to 422 residues: Serine--tRNA ligase (422 aa).

231–233 contacts L-serine; the sequence is TAE. 261–263 is an ATP binding site; sequence RSE. Residue glutamate 284 coordinates L-serine. 348 to 351 is an ATP binding site; that stretch reads EISS. Residue serine 383 participates in L-serine binding.

The protein belongs to the class-II aminoacyl-tRNA synthetase family. Type-1 seryl-tRNA synthetase subfamily. Homodimer. The tRNA molecule binds across the dimer.

The protein localises to the cytoplasm. The catalysed reaction is tRNA(Ser) + L-serine + ATP = L-seryl-tRNA(Ser) + AMP + diphosphate + H(+). It carries out the reaction tRNA(Sec) + L-serine + ATP = L-seryl-tRNA(Sec) + AMP + diphosphate + H(+). It participates in aminoacyl-tRNA biosynthesis; selenocysteinyl-tRNA(Sec) biosynthesis; L-seryl-tRNA(Sec) from L-serine and tRNA(Sec): step 1/1. In terms of biological role, catalyzes the attachment of serine to tRNA(Ser). Is also able to aminoacylate tRNA(Sec) with serine, to form the misacylated tRNA L-seryl-tRNA(Sec), which will be further converted into selenocysteinyl-tRNA(Sec). The sequence is that of Serine--tRNA ligase from Mycoplasmopsis agalactiae (strain NCTC 10123 / CIP 59.7 / PG2) (Mycoplasma agalactiae).